Here is a 146-residue protein sequence, read N- to C-terminus: Acireductone dioxygenase (146 aa).

Positions 71, 73, 77, and 116 each coordinate Fe(2+). Residues His-71, His-73, Glu-77, and His-116 each coordinate Ni(2+).

It belongs to the acireductone dioxygenase (ARD) family. The cofactor is Fe(2+). It depends on Ni(2+) as a cofactor.

It is found in the cytoplasm. The protein resides in the nucleus. It catalyses the reaction 1,2-dihydroxy-5-(methylsulfanyl)pent-1-en-3-one + O2 = 4-methylsulfanyl-2-oxobutanoate + formate + 2 H(+). It carries out the reaction 1,2-dihydroxy-5-(methylsulfanyl)pent-1-en-3-one + O2 = 3-(methylsulfanyl)propanoate + CO + formate + 2 H(+). Its pathway is amino-acid biosynthesis; L-methionine biosynthesis via salvage pathway; L-methionine from S-methyl-5-thio-alpha-D-ribose 1-phosphate: step 5/6. Functionally, catalyzes 2 different reactions between oxygen and the acireductone 1,2-dihydroxy-3-keto-5-methylthiopentene (DHK-MTPene) depending upon the metal bound in the active site. Fe-containing acireductone dioxygenase (Fe-ARD) produces formate and 2-keto-4-methylthiobutyrate (KMTB), the alpha-ketoacid precursor of methionine in the methionine recycle pathway. Ni-containing acireductone dioxygenase (Ni-ARD) produces methylthiopropionate, carbon monoxide and formate, and does not lie on the methionine recycle pathway. The sequence is that of Acireductone dioxygenase from Heterostelium pallidum (strain ATCC 26659 / Pp 5 / PN500) (Cellular slime mold).